Reading from the N-terminus, the 642-residue chain is Threonine--tRNA ligase (642 aa).

The TGS domain maps to 1–61 (MPVVTLPDGS…DSDANLAIIT (61 aa)). A catalytic region spans residues 243–534 (DHRKIGKQLD…LTEEYAGFFP (292 aa)). Residues cysteine 334, histidine 385, and histidine 511 each contribute to the Zn(2+) site.

The protein belongs to the class-II aminoacyl-tRNA synthetase family. Homodimer. Requires Zn(2+) as cofactor.

It localises to the cytoplasm. It catalyses the reaction tRNA(Thr) + L-threonine + ATP = L-threonyl-tRNA(Thr) + AMP + diphosphate + H(+). In terms of biological role, catalyzes the attachment of threonine to tRNA(Thr) in a two-step reaction: L-threonine is first activated by ATP to form Thr-AMP and then transferred to the acceptor end of tRNA(Thr). Also edits incorrectly charged L-seryl-tRNA(Thr). The chain is Threonine--tRNA ligase from Photorhabdus laumondii subsp. laumondii (strain DSM 15139 / CIP 105565 / TT01) (Photorhabdus luminescens subsp. laumondii).